Reading from the N-terminus, the 263-residue chain is MTKVKVAIADDNRELLKTMEHYFQGHPEIEIIATASNGKVCLQMLEEYTPDILLLDIIMPHLDGLAVLEAMYQNDRMSSIQVIMLTAFGQEDVMKQAVDLGASYFMLKPFEFDQLVQKILHCAGQKASIPKKASVLQPTTPQKLNQHQLDSTITAIIKEIGVPAHIKGYSYLREAIQMVFEDIELLGSVTKILYPEIAKKFNTTPSRVERAIRHAIEVAWNRGNYEYISSMFGYTEHHLKSKPTNSEFIAMIADKIRIDMMAS.

The 119-residue stretch at 5-123 (KVAIADDNRE…QLVQKILHCA (119 aa)) folds into the Response regulatory domain. Residues aspartate 10, aspartate 11, and aspartate 56 each coordinate Ca(2+). Aspartate 56 is subject to 4-aspartylphosphate. Positions 195-214 (PEIAKKFNTTPSRVERAIRH) form a DNA-binding region, H-T-H motif.

Requires Ca(2+) as cofactor. In terms of processing, phosphorylated by KinA and KinB.

The protein localises to the cytoplasm. Functionally, may play the central regulatory role in sporulation. It may be an element of the effector pathway responsible for the activation of sporulation genes in response to nutritional stress. Spo0A may act in concert with Spo0H (a sigma factor) to control the expression of some genes that are critical to the sporulation process. Repressor of abrB, activator of the spoIIa operon. Binds the DNA sequence 5'-TGNCGAA-3' (0A box). This chain is Stage 0 sporulation protein A (spo0A), found in Lysinibacillus sphaericus (Bacillus sphaericus).